The primary structure comprises 190 residues: 3-isopropylmalate dehydratase small subunit (190 aa).

It belongs to the LeuD family. LeuD type 1 subfamily. As to quaternary structure, heterodimer of LeuC and LeuD.

The enzyme catalyses (2R,3S)-3-isopropylmalate = (2S)-2-isopropylmalate. Its pathway is amino-acid biosynthesis; L-leucine biosynthesis; L-leucine from 3-methyl-2-oxobutanoate: step 2/4. Its function is as follows. Catalyzes the isomerization between 2-isopropylmalate and 3-isopropylmalate, via the formation of 2-isopropylmaleate. This chain is 3-isopropylmalate dehydratase small subunit, found in Staphylococcus aureus (strain MSSA476).